Reading from the N-terminus, the 1075-residue chain is Protein EXPORTIN 1A (1075 aa).

Residues 37-103 (ADQILRDLQA…KNYISEVIVQ (67 aa)) form the Importin N-terminal domain. HEAT repeat units lie at residues 91 to 130 (DGMKNYISEVIVQLSSNEASFRSERLYVNKLNVILVQIVK), 135 to 171 (AKWTSFIPDLVAAAKTSETICENCMAILKLLSEEVFD), 232 to 267 (IFESTLLETLLKFFPVPAYRNLTIQCLTEVAALNFG), 336 to 373 (SLLLAGLEYLINISYVDDTEVFKVCLDYWNSLVLELFD), 388 to 425 (MGLQPFLPGMVDGLGSQVMQRRQLYSHPMSKLRGLMIN), 474 to 513 (DTEKQMLRKLNKQLSGEEWAWNNLNTLCWAIGSISGSMAE), 563 to 600 (KFLKTVVNKLFEFMHETHPGVQDMACDTFLKIVQKCKR), 612 to 649 (PFVSELLTGLATTVQDLEPHQIHSFYESVGNMIQAESD), 682 to 719 (LKDQVVIRTVLNILQTNTSAATSLGTYFLSQISLIFLD), 756 to 793 (RETLKLIETFLDKAEDQPHIGKQFVPPMMESVLGDYAR), 798 to 835 (ARESEVLSLFATIINKYKATMLDDVPHIFEAVFQCTLE), and 894 to 934 (ETGL…VLTD).

The protein belongs to the exportin family. In terms of assembly, interacts with RAN1. As to expression, expressed ubiquitously, with higher levels in stems, inflorescences and roots. Present in mature pollen grains, unpollinated pistils, and 2-week-old seedlings.

Its subcellular location is the nucleus. It is found in the nuclear pore complex. The protein resides in the nucleus membrane. In terms of biological role, receptor for the leucine-rich nuclear export signal (NES). Binds cooperatively to the NES on its target protein and to the small GTPase Ran in its active GTP-bound form. Required for the maternal-to-embryonic transition and during gametophyte development. Involved in heat-induced oxidative stress basal resistance. The sequence is that of Protein EXPORTIN 1A from Arabidopsis thaliana (Mouse-ear cress).